Consider the following 37-residue polypeptide: Large ribosomal subunit protein bL36 (37 aa).

The protein belongs to the bacterial ribosomal protein bL36 family.

The polypeptide is Large ribosomal subunit protein bL36 (Aromatoleum aromaticum (strain DSM 19018 / LMG 30748 / EbN1) (Azoarcus sp. (strain EbN1))).